A 987-amino-acid polypeptide reads, in one-letter code: UvrABC system protein A (987 aa).

33–40 (GLSGSGKS) is a binding site for ATP. Residues 255–282 (CPVCDYSLPELEPRLFSFNAPVGACPSC) form a C4-type zinc finger. ABC transporter domains lie at 312-589 (WDRR…PRSL) and 609-938 (PNPK…QFLA). 642–649 (GVSGSGKS) contacts ATP. The segment at 741 to 767 (CEACQGDGMIKVEMHFLPDVYVPCDVC) adopts a C4-type zinc-finger fold. The interval 948-987 (ETRPAAMANKPDARPPRKVKPEKVAKAAKSATKKTAKKAS) is disordered. Residues 958–972 (PDARPPRKVKPEKVA) show a composition bias toward basic and acidic residues. Residues 978–987 (ATKKTAKKAS) show a composition bias toward basic residues.

It belongs to the ABC transporter superfamily. UvrA family. In terms of assembly, forms a heterotetramer with UvrB during the search for lesions.

It is found in the cytoplasm. Its function is as follows. The UvrABC repair system catalyzes the recognition and processing of DNA lesions. UvrA is an ATPase and a DNA-binding protein. A damage recognition complex composed of 2 UvrA and 2 UvrB subunits scans DNA for abnormalities. When the presence of a lesion has been verified by UvrB, the UvrA molecules dissociate. The sequence is that of UvrABC system protein A from Xanthomonas axonopodis pv. citri (strain 306).